A 1386-amino-acid polypeptide reads, in one-letter code: Lysophospholipase NTE1 (1386 aa).

The Cytoplasmic segment spans residues M1–T19. A helical transmembrane segment spans residues T20 to F40. The Lumenal portion of the chain corresponds to K41 to N65. Residues L66–I86 form a helical membrane-spanning segment. The Cytoplasmic segment spans residues R87 to I1386. The interval E394–T416 is disordered. A compositionally biased stretch (basic residues) spans K402–Q411. A nucleoside 3',5'-cyclic phosphate contacts are provided by residues K577–L701 and K697–K821. The 165-residue stretch at L1081 to K1245 folds into the PNPLA domain. The short motif at G1085–G1090 is the GXGXXG element. Residues G1112–G1116 carry the GXSXG motif. S1114 functions as the Nucleophile in the catalytic mechanism. The active-site Proton acceptor is the D1232. The DGA/G motif lies at D1232–G1234.

This sequence belongs to the NTE family.

Its subcellular location is the endoplasmic reticulum membrane. It carries out the reaction a 1-acyl-sn-glycero-3-phosphocholine + H2O = sn-glycerol 3-phosphocholine + a fatty acid + H(+). Its activity is regulated as follows. Inhibited by organophosphorus esters. Its function is as follows. Intracellular phospholipase B that catalyzes the double deacylation of phosphatidylcholine (PC) to glycerophosphocholine (GroPCho). Plays an important role in membrane lipid homeostasis. Responsible for the rapid PC turnover in response to inositol, elevated temperatures, or when choline is present in the growth medium. The chain is Lysophospholipase NTE1 (NTE1) from Candida albicans (strain SC5314 / ATCC MYA-2876) (Yeast).